The primary structure comprises 369 residues: Phospho-N-acetylmuramoyl-pentapeptide-transferase (369 aa).

The next 10 membrane-spanning stretches (helical) occupy residues 3–23 (ALLG…PLFI), 53–73 (GGIV…LLTW), 81–101 (VTPS…VGFL), 118–138 (WQKI…AITL), 162–182 (FMAL…CLIV), 198–218 (LAAG…FWQF), 240–260 (PLDL…FLWW), 267–287 (IFMG…LAIL), 290–310 (TELL…SVVL), and 347–367 (FWII…LEWI).

The protein belongs to the glycosyltransferase 4 family. MraY subfamily. Mg(2+) serves as cofactor.

It localises to the cell membrane. It catalyses the reaction UDP-N-acetyl-alpha-D-muramoyl-L-alanyl-gamma-D-glutamyl-meso-2,6-diaminopimeloyl-D-alanyl-D-alanine + di-trans,octa-cis-undecaprenyl phosphate = di-trans,octa-cis-undecaprenyl diphospho-N-acetyl-alpha-D-muramoyl-L-alanyl-D-glutamyl-meso-2,6-diaminopimeloyl-D-alanyl-D-alanine + UMP. The protein operates within cell wall biogenesis; peptidoglycan biosynthesis. Catalyzes the initial step of the lipid cycle reactions in the biosynthesis of the cell wall peptidoglycan: transfers peptidoglycan precursor phospho-MurNAc-pentapeptide from UDP-MurNAc-pentapeptide onto the lipid carrier undecaprenyl phosphate, yielding undecaprenyl-pyrophosphoryl-MurNAc-pentapeptide, known as lipid I. This is Phospho-N-acetylmuramoyl-pentapeptide-transferase from Clavibacter sepedonicus (Clavibacter michiganensis subsp. sepedonicus).